The chain runs to 183 residues: Nucleoside triphosphate pyrophosphatase (183 aa).

The active-site Proton acceptor is the aspartate 71.

The protein belongs to the Maf family. A divalent metal cation is required as a cofactor.

It localises to the cytoplasm. The enzyme catalyses a ribonucleoside 5'-triphosphate + H2O = a ribonucleoside 5'-phosphate + diphosphate + H(+). The catalysed reaction is a 2'-deoxyribonucleoside 5'-triphosphate + H2O = a 2'-deoxyribonucleoside 5'-phosphate + diphosphate + H(+). In terms of biological role, nucleoside triphosphate pyrophosphatase. May have a dual role in cell division arrest and in preventing the incorporation of modified nucleotides into cellular nucleic acids. The protein is Nucleoside triphosphate pyrophosphatase of Campylobacter jejuni subsp. jejuni serotype O:2 (strain ATCC 700819 / NCTC 11168).